Reading from the N-terminus, the 185-residue chain is Large ribosomal subunit protein uL5 (185 aa).

It belongs to the universal ribosomal protein uL5 family. Part of the 50S ribosomal subunit; part of the 5S rRNA/L5/L18/L25 subcomplex. Contacts the 5S rRNA and the P site tRNA. Forms a bridge to the 30S subunit in the 70S ribosome.

This is one of the proteins that bind and probably mediate the attachment of the 5S RNA into the large ribosomal subunit, where it forms part of the central protuberance. In the 70S ribosome it contacts protein S13 of the 30S subunit (bridge B1b), connecting the 2 subunits; this bridge is implicated in subunit movement. Contacts the P site tRNA; the 5S rRNA and some of its associated proteins might help stabilize positioning of ribosome-bound tRNAs. The polypeptide is Large ribosomal subunit protein uL5 (Bradyrhizobium sp. (strain BTAi1 / ATCC BAA-1182)).